Consider the following 243-residue polypeptide: Pyridoxine 5'-phosphate synthase (243 aa).

Asn-9 provides a ligand contact to 3-amino-2-oxopropyl phosphate. 11–12 (DH) is a 1-deoxy-D-xylulose 5-phosphate binding site. Position 20 (Arg-20) interacts with 3-amino-2-oxopropyl phosphate. The Proton acceptor role is filled by His-45. 1-deoxy-D-xylulose 5-phosphate is bound by residues Arg-47 and His-52. Residue Glu-72 is the Proton acceptor of the active site. Thr-102 is a 1-deoxy-D-xylulose 5-phosphate binding site. Catalysis depends on His-193, which acts as the Proton donor. 3-amino-2-oxopropyl phosphate is bound by residues Gly-194 and 215–216 (GH).

This sequence belongs to the PNP synthase family. As to quaternary structure, homooctamer; tetramer of dimers.

It is found in the cytoplasm. The catalysed reaction is 3-amino-2-oxopropyl phosphate + 1-deoxy-D-xylulose 5-phosphate = pyridoxine 5'-phosphate + phosphate + 2 H2O + H(+). It participates in cofactor biosynthesis; pyridoxine 5'-phosphate biosynthesis; pyridoxine 5'-phosphate from D-erythrose 4-phosphate: step 5/5. Functionally, catalyzes the complicated ring closure reaction between the two acyclic compounds 1-deoxy-D-xylulose-5-phosphate (DXP) and 3-amino-2-oxopropyl phosphate (1-amino-acetone-3-phosphate or AAP) to form pyridoxine 5'-phosphate (PNP) and inorganic phosphate. This is Pyridoxine 5'-phosphate synthase from Aliivibrio fischeri (strain ATCC 700601 / ES114) (Vibrio fischeri).